The sequence spans 490 residues: MNLAEICDNAKKGREYALLGNYDSSMVYYQGVIQQIHRHCQSVRDPAVKGKWQQVRQELLEEYEQVKSIVSTLESFKIDKPPDFPVSYQDEPFRDPAVWPPPVPAEHRAPPQIRRPNREVRPLRKDVAGVGARGPVGRAHPISKSEKPSTNKDKDYRARGRDDKGRKNMQDGASDGDILKFDGAGYDKDLVEALERDIVSRNPSIHWDDIADLEEAKKLLREAVVLPMWMPDFFKGIRRPWKGVLMVGPPGTGKTMLAKAVATECGTTFFNVSSSTLTSKYRGESEKLVRLLFEMARFYAPTTIFIDEIDSICSRRGTSDEHEASRRVKSELLIQMDGVGGALENDDPSKMVMVLAATNFPWDIDEALRRRLEKRIYIPLPTAKGRTDLLKINLREVELDPDIQLEDIAEKIEGYSGADITNVCRDASLMAMRRRINGLSPEEIRALSKEELQMPVTKGDFDLALKKIAKSVSDADLEKYEKWMTEFGSA.

Position 1 is an N-acetylmethionine (M1). Residues 95–178 form a disordered region; that stretch reads DPAVWPPPVP…MQDGASDGDI (84 aa). The segment covering 116 to 127 has biased composition (basic and acidic residues); it reads PNREVRPLRKDV. The segment covering 128–139 has biased composition (low complexity); that stretch reads AGVGARGPVGRA. The span at 143–169 shows a compositional bias: basic and acidic residues; that stretch reads SKSEKPSTNKDKDYRARGRDDKGRKNM. S174 carries the post-translational modification Phosphoserine. 248–255 serves as a coordination point for ATP; the sequence is GPPGTGKT.

Belongs to the AAA ATPase family. Katanin p60 subunit A1 subfamily. A-like 1 sub-subfamily. In terms of assembly, interacts with KATNB1 and KATNBL1.

Its subcellular location is the cytoplasm. The protein localises to the cytoskeleton. The protein resides in the spindle pole. It is found in the spindle. The enzyme catalyses n ATP + n H2O + a microtubule = n ADP + n phosphate + (n+1) alpha/beta tubulin heterodimers.. In terms of biological role, regulates microtubule dynamics in Sertoli cells, a process that is essential for spermiogenesis and male fertility. Severs microtubules in an ATP-dependent manner, promoting rapid reorganization of cellular microtubule arrays. Has microtubule-severing activity in vitro. This Sorex araneus (Eurasian common shrew) protein is Katanin p60 ATPase-containing subunit A-like 1.